A 151-amino-acid chain; its full sequence is Cytochrome c-type biogenesis protein CcmE (151 aa).

The Cytoplasmic portion of the chain corresponds to 1 to 9 (MKGLKKKRR). A helical; Signal-anchor for type II membrane protein membrane pass occupies residues 10–30 (IQIIALAFVALAGSTALIGYA). Over 31–151 (MRDGINFFRS…FQHTEDQPQG (121 aa)) the chain is Periplasmic. Heme is bound by residues His123 and Tyr127.

This sequence belongs to the CcmE/CycJ family.

The protein resides in the cell inner membrane. Its function is as follows. Heme chaperone required for the biogenesis of c-type cytochromes. Transiently binds heme delivered by CcmC and transfers the heme to apo-cytochromes in a process facilitated by CcmF and CcmH. This Cereibacter sphaeroides (strain ATCC 17029 / ATH 2.4.9) (Rhodobacter sphaeroides) protein is Cytochrome c-type biogenesis protein CcmE.